Consider the following 205-residue polypeptide: Ribosomal RNA small subunit methyltransferase J (205 aa).

Residues 56-57, 72-73, and Asp124 each bind S-adenosyl-L-methionine; these read RD and ER.

It belongs to the methyltransferase superfamily. RsmJ family.

It localises to the cytoplasm. The enzyme catalyses guanosine(1516) in 16S rRNA + S-adenosyl-L-methionine = N(2)-methylguanosine(1516) in 16S rRNA + S-adenosyl-L-homocysteine + H(+). Functionally, specifically methylates the guanosine in position 1516 of 16S rRNA. The protein is Ribosomal RNA small subunit methyltransferase J of Brucella anthropi (strain ATCC 49188 / DSM 6882 / CCUG 24695 / JCM 21032 / LMG 3331 / NBRC 15819 / NCTC 12168 / Alc 37) (Ochrobactrum anthropi).